A 61-amino-acid polypeptide reads, in one-letter code: Large ribosomal subunit protein uL30 (61 aa).

It belongs to the universal ribosomal protein uL30 family. In terms of assembly, part of the 50S ribosomal subunit.

This Corynebacterium diphtheriae (strain ATCC 700971 / NCTC 13129 / Biotype gravis) protein is Large ribosomal subunit protein uL30.